Consider the following 265-residue polypeptide: MIKWPWKSNETAPDALLPWDEALAIPVLASLSADEQSRLVQLADRFLQQKRLVPLQGFELDELKSARIALLFCLPVLELGIEWLDGFHEVLIYPAPFVVDDEWEDDIGLVHNQRVVQSGQSWQQGPIILNWLDIQDSFDASGFNLIVHEVAHKLDTRNGDRASGVPFIPLREVAGWEHDLHAAMNNIQDEIDLVGESAASIDAYAATDPAECFAVLSEYFFSAPELFAPRFPALWQRFCHFYQQDPMQRLRENAGYDGNASPQVH.

Residues His111, His148, His152, and Glu211 each contribute to the Zn(2+) site.

It belongs to the MtfA family. In terms of assembly, interacts with Mlc. Requires Zn(2+) as cofactor.

Its subcellular location is the cytoplasm. Involved in the modulation of the activity of the glucose-phosphotransferase system (glucose-PTS). Interacts with the transcriptional repressor Mlc, preventing its interaction with DNA and leading to the modulation of expression of genes regulated by Mlc, including ptsG, which encodes the PTS system glucose-specific EIICB component. Its function is as follows. Shows zinc-dependent metallopeptidase activity. The protein is Mlc titration factor A of Enterobacter sp. (strain 638).